We begin with the raw amino-acid sequence, 194 residues long: ATP synthase subunit delta (194 aa).

It belongs to the ATPase delta chain family. F-type ATPases have 2 components, F(1) - the catalytic core - and F(0) - the membrane proton channel. F(1) has five subunits: alpha(3), beta(3), gamma(1), delta(1), epsilon(1). F(0) has three main subunits: a(1), b(2) and c(10-14). The alpha and beta chains form an alternating ring which encloses part of the gamma chain. F(1) is attached to F(0) by a central stalk formed by the gamma and epsilon chains, while a peripheral stalk is formed by the delta and b chains.

It localises to the cell inner membrane. Its function is as follows. F(1)F(0) ATP synthase produces ATP from ADP in the presence of a proton or sodium gradient. F-type ATPases consist of two structural domains, F(1) containing the extramembraneous catalytic core and F(0) containing the membrane proton channel, linked together by a central stalk and a peripheral stalk. During catalysis, ATP synthesis in the catalytic domain of F(1) is coupled via a rotary mechanism of the central stalk subunits to proton translocation. This protein is part of the stalk that links CF(0) to CF(1). It either transmits conformational changes from CF(0) to CF(1) or is implicated in proton conduction. This chain is ATP synthase subunit delta, found in Bartonella bacilliformis (strain ATCC 35685 / KC583 / Herrer 020/F12,63).